The following is a 289-amino-acid chain: NAD kinase (289 aa).

Asp68 acts as the Proton acceptor in catalysis. NAD(+) contacts are provided by residues 68-69, Lys73, 142-143, Arg153, Asp172, 183-188, and Gln243; these read DG, ND, and TAYSLS.

The protein belongs to the NAD kinase family. A divalent metal cation serves as cofactor.

The protein localises to the cytoplasm. The enzyme catalyses NAD(+) + ATP = ADP + NADP(+) + H(+). Functionally, involved in the regulation of the intracellular balance of NAD and NADP, and is a key enzyme in the biosynthesis of NADP. Catalyzes specifically the phosphorylation on 2'-hydroxyl of the adenosine moiety of NAD to yield NADP. This chain is NAD kinase, found in Acetivibrio thermocellus (strain ATCC 27405 / DSM 1237 / JCM 9322 / NBRC 103400 / NCIMB 10682 / NRRL B-4536 / VPI 7372) (Clostridium thermocellum).